The primary structure comprises 137 residues: MLQPKRTKYRKPHRVSYEGKAKGAKEINFGEFGLMALDGAWIDNHQIEAARIAMTRYMKRDGKIWMRIFPHMAMTKKPAEVRMGSGKGNPEKWVAVVKKGTIMFEVAQVNEQVAREALRLAMHKLPIRCKFVKRGEN.

It belongs to the universal ribosomal protein uL16 family. In terms of assembly, part of the 50S ribosomal subunit.

Functionally, binds 23S rRNA and is also seen to make contacts with the A and possibly P site tRNAs. This Mycoplasma capricolum subsp. capricolum (strain California kid / ATCC 27343 / NCTC 10154) protein is Large ribosomal subunit protein uL16.